The following is a 920-amino-acid chain: Probable helicase HelY (920 aa).

The Helicase ATP-binding domain occupies cysteine 26–threonine 184. Position 39 to 46 (alanine 39 to threonine 46) interacts with ATP. The short motif at aspartate 132 to histidine 135 is the DEVH box element. A Helicase C-terminal domain is found at glutamate 265–histidine 469.

This sequence belongs to the helicase family. SKI2 subfamily.

The chain is Probable helicase HelY (helY) from Mycobacterium leprae (strain TN).